The following is a 102-amino-acid chain: ATP-dependent Clp protease adapter protein ClpS (102 aa).

It belongs to the ClpS family. As to quaternary structure, binds to the N-terminal domain of the chaperone ClpA.

Functionally, involved in the modulation of the specificity of the ClpAP-mediated ATP-dependent protein degradation. This is ATP-dependent Clp protease adapter protein ClpS from Shewanella loihica (strain ATCC BAA-1088 / PV-4).